The following is a 234-amino-acid chain: NAD-reducing hydrogenase HoxS subunit gamma (234 aa).

A 2Fe-2S ferredoxin-type domain is found at 2 to 77 (SIQITIDGKT…GLNVEVNDPE (76 aa)). 4 residues coordinate [2Fe-2S] cluster: Cys-35, Cys-46, Cys-49, and Cys-61. The region spanning 77–116 (ELVDMRKALVEFLFAEGNHNCPSCEKSGRCQLQAVGYEVD) is the 4Fe-4S His(Cys)3-ligated-type domain. His-95, Cys-97, Cys-100, Cys-106, Cys-145, Cys-148, Cys-151, and Cys-198 together coordinate [4Fe-4S] cluster.

The protein belongs to the complex I 75 kDa subunit family. In terms of assembly, tetramer of an alpha and a gamma subunits (flavin-containing dimer), and a delta and a nickel-containing beta subunits (hydrogenase dimer). It depends on [2Fe-2S] cluster as a cofactor. Requires [4Fe-4S] cluster as cofactor.

It localises to the cytoplasm. It carries out the reaction H2 + NAD(+) = NADH + H(+). In terms of biological role, subunits alpha and gamma of HoxS constitute an NADH--oxidoreductase. The chain is NAD-reducing hydrogenase HoxS subunit gamma (hoxU) from Cupriavidus necator (strain ATCC 17699 / DSM 428 / KCTC 22496 / NCIMB 10442 / H16 / Stanier 337) (Ralstonia eutropha).